A 333-amino-acid polypeptide reads, in one-letter code: Small GTPase-like protein LIP2 (333 aa).

The interval 11–288 (NKEHMVAPLC…YKYNTLPQHN (278 aa)) is small GTPase-like. Residues 29 to 36 (GDSGVGKS), 90 to 94 (DVSGH), and 160 to 163 (NKAD) contribute to the GTP site. Residues 242-253 (SPSSAWSLSHAP) show a composition bias toward polar residues. Residues 242–265 (SPSSAWSLSHAPSQRLDEGTSDED) form a disordered region.

It belongs to the small GTPase superfamily.

In Arabidopsis thaliana (Mouse-ear cress), this protein is Small GTPase-like protein LIP2.